The chain runs to 859 residues: Cadherin-related family member 1 (859 aa).

Positions 1-21 (MRRGPRVALVLGLLRIYLAQA) are cleaved as a signal peptide. Topologically, residues 22 to 701 (NFAPHFFDNG…LIQTKDNPMK (680 aa)) are extracellular. Cadherin domains are found at residues 36 to 135 (NGNM…APRF), 136 to 247 (IQEP…APIF), 248 to 354 (VGTP…PPTF), 360 to 473 (PQNK…VPKF), 474 to 577 (TSHY…YPQF), and 569 to 691 (DVND…MAAF). 2 N-linked (GlcNAc...) asparagine glycosylation sites follow: N58 and N89. N-linked (GlcNAc...) asparagine glycosylation is present at N288. A helical membrane pass occupies residues 702–722 (AVGVLAGVMAIVVAITVLIST). Residues 723 to 859 (ATFWRNKKSN…KKSLDNKAYI (137 aa)) lie on the Cytoplasmic side of the membrane. The disordered stretch occupies residues 793–838 (PALPPPPKMASSMVAQQTVPTVSGSLTPQPSPQLPTPKTLGGPVQS). Residues 805–816 (MVAQQTVPTVSG) show a composition bias toward polar residues.

Interacts with PROM1. In terms of processing, undergoes proteolytic cleavage; produces a soluble 95 kDa N-terminal fragment and a 25 kDa cell-associated C-terminal fragment. As to expression, expressed in cone and rod photoreceptor cells (at protein level). Expressed in photoreceptor cells of the outer nuclear layer of the retina. Expressed in mitral and tufted cells in the olfactory bulb.

The protein localises to the cell membrane. Its function is as follows. Potential calcium-dependent cell-adhesion protein. May be required for the structural integrity of the outer segment (OS) of photoreceptor cells. The sequence is that of Cadherin-related family member 1 (Cdhr1) from Mus musculus (Mouse).